The primary structure comprises 123 residues: Small ribosomal subunit protein uS12 (123 aa).

Residues 11-32 (PRQEKTYREKARHLGASPQKRG) form a disordered region. A 3-methylthioaspartic acid modification is found at Asp-89.

Belongs to the universal ribosomal protein uS12 family. As to quaternary structure, part of the 30S ribosomal subunit. Contacts proteins S8 and S17. May interact with IF1 in the 30S initiation complex.

In terms of biological role, with S4 and S5 plays an important role in translational accuracy. Interacts with and stabilizes bases of the 16S rRNA that are involved in tRNA selection in the A site and with the mRNA backbone. Located at the interface of the 30S and 50S subunits, it traverses the body of the 30S subunit contacting proteins on the other side and probably holding the rRNA structure together. The combined cluster of proteins S8, S12 and S17 appears to hold together the shoulder and platform of the 30S subunit. The chain is Small ribosomal subunit protein uS12 from Methylocella silvestris (strain DSM 15510 / CIP 108128 / LMG 27833 / NCIMB 13906 / BL2).